The primary structure comprises 236 residues: MTRNWKVSKYQTVTSIKYFISFILFVLITNHVSSRILLRPCAEYLWNMRQTDIFINSSQEERAFLELQRFEDKTRFEILIGEAPQLNTQSFNKKIQEKAIELAKYSNEESIDSIANVFADLLSLCIFVLALLLGKKEIAVIKNLVNTLIYSLTDATKSFFIILFTDIFVGFHSSHGWEILIEVFLKHLGLPENKDFIFLFVATFPVVLDTVFKYWIFLYLNKISPSAVATFHNMNE.

Helical transmembrane passes span 12 to 32, 114 to 134, 161 to 181, and 196 to 216; these read TVTSIKYFISFILFVLITNHV, IANVFADLLSLCIFVLALLLG, IILFTDIFVGFHSSHGWEILI, and FIFLFVATFPVVLDTVFKYWI.

The protein belongs to the CemA family.

The protein localises to the plastid. It is found in the chloroplast inner membrane. It carries out the reaction K(+)(in) + H(+)(out) = K(+)(out) + H(+)(in). Contributes to K(+)/H(+) antiport activity by supporting proton efflux to control proton extrusion and homeostasis in chloroplasts in a light-dependent manner to modulate photosynthesis. Prevents excessive induction of non-photochemical quenching (NPQ) under continuous-light conditions. Indirectly promotes efficient inorganic carbon uptake into chloroplasts. This is Potassium/proton antiporter CemA from Chlorokybus atmophyticus (Soil alga).